The chain runs to 273 residues: Glutamate racemase (273 aa).

Residues 19-20 (DS) and 51-52 (YG) contribute to the substrate site. Catalysis depends on Cys-83, which acts as the Proton donor/acceptor. Residue 84–85 (NT) participates in substrate binding. Residue Cys-198 is the Proton donor/acceptor of the active site. 199-200 (TH) is a binding site for substrate.

The protein belongs to the aspartate/glutamate racemases family.

It carries out the reaction L-glutamate = D-glutamate. Its pathway is cell wall biogenesis; peptidoglycan biosynthesis. Its function is as follows. Provides the (R)-glutamate required for cell wall biosynthesis. The sequence is that of Glutamate racemase from Agrobacterium fabrum (strain C58 / ATCC 33970) (Agrobacterium tumefaciens (strain C58)).